Here is a 200-residue protein sequence, read N- to C-terminus: Probable GTP-binding protein EngB (200 aa).

The EngB-type G domain occupies 22–195 (GKDEIAFVGR…INNICSGINY (174 aa)). GTP is bound by residues 30–37 (GRSNVGKS), 57–61 (GKTRL), 75–78 (DLPG), 142–145 (TKSD), and 174–176 (FSS). Residues Ser37 and Thr59 each contribute to the Mg(2+) site.

It belongs to the TRAFAC class TrmE-Era-EngA-EngB-Septin-like GTPase superfamily. EngB GTPase family. Mg(2+) is required as a cofactor.

Necessary for normal cell division and for the maintenance of normal septation. The polypeptide is Probable GTP-binding protein EngB (Clostridium acetobutylicum (strain ATCC 824 / DSM 792 / JCM 1419 / IAM 19013 / LMG 5710 / NBRC 13948 / NRRL B-527 / VKM B-1787 / 2291 / W)).